Reading from the N-terminus, the 63-residue chain is Megourin-3 (63 aa).

Monomer. In terms of processing, contains four disulfide bonds.

The protein resides in the secreted. In terms of biological role, has antimicrobial activity against Gram-positive bacteria and fungi. This Megoura viciae (Vetch aphid) protein is Megourin-3.